Consider the following 626-residue polypeptide: Chaperone protein HtpG (626 aa).

An a; substrate-binding region spans residues 1–339 (MSQNQETRGF…SNDLPLNVSR (339 aa)). Residues 340-555 (EILQDNKITA…NDQMTTQMAK (216 aa)) are b. The segment at 556–626 (LFAAAGQPVP…FIKRINKLLG (71 aa)) is c.

It belongs to the heat shock protein 90 family. Homodimer.

Its subcellular location is the cytoplasm. Its function is as follows. Molecular chaperone. Has ATPase activity. The protein is Chaperone protein HtpG of Haemophilus influenzae (strain ATCC 51907 / DSM 11121 / KW20 / Rd).